Here is a 130-residue protein sequence, read N- to C-terminus: Small ribosomal subunit protein uS9 (130 aa).

It belongs to the universal ribosomal protein uS9 family.

This Acidovorax ebreus (strain TPSY) (Diaphorobacter sp. (strain TPSY)) protein is Small ribosomal subunit protein uS9.